The following is a 132-amino-acid chain: Interleukin-4 (132 aa).

Residues 1 to 24 form the signal peptide; that stretch reads MGLTSQLIPTLVCLLALTSTFVHG. N-linked (GlcNAc...) asparagine glycans are attached at residues N28, N45, N62, N83, N95, and N101. Disulfide bonds link C48-C84 and C70-C104.

It belongs to the IL-4/IL-13 family.

The protein localises to the secreted. Functionally, participates in at least several B-cell activation processes as well as of other cell types. It is a costimulator of DNA-synthesis. It induces the expression of class II MHC molecules on resting B-cells. It enhances both secretion and cell surface expression of IgE and IgG1. It also regulates the expression of the low affinity Fc receptor for IgE (CD23) on both lymphocytes and monocytes. Positively regulates IL31RA expression in macrophages. Stimulates autophagy in dendritic cells by interfering with mTORC1 signaling and through the induction of RUFY4. The protein is Interleukin-4 (IL4) of Canis lupus familiaris (Dog).